The following is a 236-amino-acid chain: C-&gt;U-editing enzyme APOBEC-1 (236 aa).

Residues Gly-10–Leu-134 enclose the CMP/dCMP-type deaminase domain. His-61 contributes to the Zn(2+) binding site. The Proton donor role is filled by Glu-63. Residues Cys-93 and Cys-96 each contribute to the Zn(2+) site.

The protein belongs to the cytidine and deoxycytidylate deaminase family. In terms of assembly, homodimer. Interacts with A1CF; form an mRNA editing complex. Interacts with RBM47; form an mRNA editing complex. Found in a complex with CELF2/CUGBP2 and A1CF. Interacts with HNRPAB. Interacts with SYNCRIP. The cofactor is Zn(2+).

The protein resides in the cytoplasm. Its subcellular location is the nucleus. It catalyses the reaction a cytidine in mRNA + H2O + H(+) = a uridine in mRNA + NH4(+). The enzyme catalyses cytidine(6666) in apoB mRNA + H2O + H(+) = uridine(6666) in apoB mRNA + NH4(+). Cytidine deaminase catalyzing the cytidine to uridine postranscriptional editing of a variety of mRNAs. Form complexes with cofactors that confer differential editing activity and selectivity. Responsible for the postranscriptional editing of a CAA codon for Gln to a UAA codon for stop in the apolipoprotein B mRNA. Also involved in CGA (Arg) to UGA (Stop) editing in the NF1 mRNA. May also play a role in the epigenetic regulation of gene expression by participating in DNA demethylation. The chain is C-&gt;U-editing enzyme APOBEC-1 from Pongo pygmaeus (Bornean orangutan).